Reading from the N-terminus, the 134-residue chain is Small ribosomal subunit protein bS6 (134 aa).

The disordered stretch occupies residues 99–134 (EPSAMMQKRDRDERKDRERGRRRDDDGYVGERNEEG). The span at 105 to 134 (QKRDRDERKDRERGRRRDDDGYVGERNEEG) shows a compositional bias: basic and acidic residues.

Belongs to the bacterial ribosomal protein bS6 family.

Its function is as follows. Binds together with bS18 to 16S ribosomal RNA. The protein is Small ribosomal subunit protein bS6 of Methylobacterium sp. (strain 4-46).